A 293-amino-acid chain; its full sequence is 4-hydroxybenzoate octaprenyltransferase (293 aa).

A run of 7 helical transmembrane segments spans residues 25–45, 48–68, 101–121, 142–162, 165–185, 223–243, and 271–291; these read IGNF…AKGL, LKVL…GCVI, LFVV…PLTI, HFPQ…AFAA, GAVA…ATIY, VMLA…FWYL, and FLNN…DLHL.

The protein belongs to the UbiA prenyltransferase family. Requires Mg(2+) as cofactor.

It is found in the cell inner membrane. It carries out the reaction all-trans-octaprenyl diphosphate + 4-hydroxybenzoate = 4-hydroxy-3-(all-trans-octaprenyl)benzoate + diphosphate. The protein operates within cofactor biosynthesis; ubiquinone biosynthesis. Functionally, catalyzes the prenylation of para-hydroxybenzoate (PHB) with an all-trans polyprenyl group. Mediates the second step in the final reaction sequence of ubiquinone-8 (UQ-8) biosynthesis, which is the condensation of the polyisoprenoid side chain with PHB, generating the first membrane-bound Q intermediate 3-octaprenyl-4-hydroxybenzoate. In Alkalilimnicola ehrlichii (strain ATCC BAA-1101 / DSM 17681 / MLHE-1), this protein is 4-hydroxybenzoate octaprenyltransferase.